The primary structure comprises 120 residues: Ribosome-binding factor A (120 aa).

It belongs to the RbfA family. Monomer. Binds 30S ribosomal subunits, but not 50S ribosomal subunits or 70S ribosomes.

The protein resides in the cytoplasm. One of several proteins that assist in the late maturation steps of the functional core of the 30S ribosomal subunit. Associates with free 30S ribosomal subunits (but not with 30S subunits that are part of 70S ribosomes or polysomes). Required for efficient processing of 16S rRNA. May interact with the 5'-terminal helix region of 16S rRNA. The chain is Ribosome-binding factor A from Chlorobaculum tepidum (strain ATCC 49652 / DSM 12025 / NBRC 103806 / TLS) (Chlorobium tepidum).